The primary structure comprises 336 residues: Fructose-1,6-bisphosphatase class 1 (336 aa).

4 residues coordinate Mg(2+): Glu90, Asp112, Leu114, and Asp115. Residues 115–118 (DGSS), Asn207, and Lys273 each bind substrate. Mg(2+) is bound at residue Glu279.

It belongs to the FBPase class 1 family. In terms of assembly, homotetramer. It depends on Mg(2+) as a cofactor.

It is found in the cytoplasm. The catalysed reaction is beta-D-fructose 1,6-bisphosphate + H2O = beta-D-fructose 6-phosphate + phosphate. Its pathway is carbohydrate biosynthesis; gluconeogenesis. The polypeptide is Fructose-1,6-bisphosphatase class 1 (Xanthomonas oryzae pv. oryzae (strain PXO99A)).